The primary structure comprises 59 residues: MAVPKKRTSMSKKRIRKNIWKKKTYFSIVQSYSLVKSRSFSSGNEHPKPKGFSGQQTNK.

A disordered region spans residues 37 to 59 (SRSFSSGNEHPKPKGFSGQQTNK).

It belongs to the bacterial ribosomal protein bL32 family.

The protein localises to the plastid. The protein resides in the chloroplast. In Hordeum vulgare (Barley), this protein is Large ribosomal subunit protein bL32c.